A 448-amino-acid chain; its full sequence is Glucose-6-phosphate isomerase (448 aa).

The active-site Proton donor is E290. Residues H311 and K425 contribute to the active site.

Belongs to the GPI family.

It localises to the cytoplasm. It carries out the reaction alpha-D-glucose 6-phosphate = beta-D-fructose 6-phosphate. It participates in carbohydrate biosynthesis; gluconeogenesis. It functions in the pathway carbohydrate degradation; glycolysis; D-glyceraldehyde 3-phosphate and glycerone phosphate from D-glucose: step 2/4. Functionally, catalyzes the reversible isomerization of glucose-6-phosphate to fructose-6-phosphate. This chain is Glucose-6-phosphate isomerase, found in Oceanobacillus iheyensis (strain DSM 14371 / CIP 107618 / JCM 11309 / KCTC 3954 / HTE831).